The following is a 491-amino-acid chain: Ketol-acid reductoisomerase (NADP(+)) (491 aa).

The 194-residue stretch at 15–208 (AQLGKCRFMA…GGHRAGVLES (194 aa)) folds into the KARI N-terminal Rossmann domain. NADP(+) is bound by residues 45 to 48 (CGAQ), Arg68, Arg76, Ser78, and 108 to 110 (DKQ). The active site involves His132. Gly158 lines the NADP(+) pocket. 2 consecutive KARI C-terminal knotted domains span residues 209 to 344 (SFVA…TAPQ) and 345 to 484 (YEGK…MTDM). Asp217, Glu221, Glu389, and Glu393 together coordinate Mg(2+). Ser414 is a binding site for substrate.

This sequence belongs to the ketol-acid reductoisomerase family. Mg(2+) serves as cofactor.

It catalyses the reaction (2R)-2,3-dihydroxy-3-methylbutanoate + NADP(+) = (2S)-2-acetolactate + NADPH + H(+). It carries out the reaction (2R,3R)-2,3-dihydroxy-3-methylpentanoate + NADP(+) = (S)-2-ethyl-2-hydroxy-3-oxobutanoate + NADPH + H(+). It participates in amino-acid biosynthesis; L-isoleucine biosynthesis; L-isoleucine from 2-oxobutanoate: step 2/4. The protein operates within amino-acid biosynthesis; L-valine biosynthesis; L-valine from pyruvate: step 2/4. In terms of biological role, involved in the biosynthesis of branched-chain amino acids (BCAA). Catalyzes an alkyl-migration followed by a ketol-acid reduction of (S)-2-acetolactate (S2AL) to yield (R)-2,3-dihydroxy-isovalerate. In the isomerase reaction, S2AL is rearranged via a Mg-dependent methyl migration to produce 3-hydroxy-3-methyl-2-ketobutyrate (HMKB). In the reductase reaction, this 2-ketoacid undergoes a metal-dependent reduction by NADPH to yield (R)-2,3-dihydroxy-isovalerate. In Klebsiella pneumoniae subsp. pneumoniae (strain ATCC 700721 / MGH 78578), this protein is Ketol-acid reductoisomerase (NADP(+)).